The primary structure comprises 523 residues: Cytochrome P450 monooxygenase ple5B (523 aa).

A helical transmembrane segment spans residues 16–33 (IAAAAAGSAVAVYKLLQL). N-linked (GlcNAc...) asparagine glycans are attached at residues asparagine 82, asparagine 103, asparagine 122, asparagine 295, asparagine 379, and asparagine 423. Cysteine 446 serves as a coordination point for heme.

Belongs to the cytochrome P450 family. Heme is required as a cofactor.

It localises to the membrane. It participates in secondary metabolite biosynthesis; terpenoid biosynthesis. Cytochrome P450 monooxygenase; part of the gene cluster that mediates the biosynthesis of pleuromutilin, a tricyclic diterpene showing antibacterial properties. The geranylgeranyl diphosphate (GGPP) synthase ple4 catalyzes the first step in pleuromutilin biosynthesis. GGPP is then substrate of the premutilin synthase (PS) ple3 to yield premutilin. Premutilin synthase is a bifunctional enzyme composed of the fusion of a class II diterpene cyclase (DTC) and a class I diterpene synthase (DTS), with the corresponding domains and active sites containing characteristic aspartate-rich motifs. GGPP is first converted to mutildienyl-diphosphate (MPP) at the class II DTC site. MPP is subsequently further cyclized at the class I DTS site, followed by a 1,5-hydride shift and addition of water prior to terminating deprotonation, to yield premutilin. The cytochrome P450 monooxygenases ple5 and ple6 hydroxylate premutilin at C-11 and C-3, respectively, producing 11-hydroxypremutilin and 3-hydroxypremutilin. The combination of the actions of both ple5 and ple6 leads to the production of 3,11-dihydroxypremutilin. The short chain dehydrogenase ple7 further converts 3,11-dihydroxypremutilin into mutilin. The acetyltransferase ple2 then acetylates mutilin to produce 14-O-acetylmutilin. Finally, the cytochrome P450 monooxygenase ple1 catalyzes hydroxylation on the alpha position of the acetyl side chain of 14-O-acetylmutilin to yield pleuromutilin. The polypeptide is Cytochrome P450 monooxygenase ple5B (Rhodocybe pseudopiperita (Clitopilus pseudopiperitus)).